We begin with the raw amino-acid sequence, 239 residues long: Purine nucleoside phosphorylase DeoD-type 1 (239 aa).

His5 contacts a purine D-ribonucleoside. Phosphate is bound by residues Gly21, Arg25, Arg44, and 88 to 91 (RVGS). A purine D-ribonucleoside contacts are provided by residues 180-182 (EME) and 204-205 (SD). Asp205 functions as the Proton donor in the catalytic mechanism.

The protein belongs to the PNP/UDP phosphorylase family. In terms of assembly, homohexamer; trimer of homodimers.

It carries out the reaction a purine D-ribonucleoside + phosphate = a purine nucleobase + alpha-D-ribose 1-phosphate. The catalysed reaction is a purine 2'-deoxy-D-ribonucleoside + phosphate = a purine nucleobase + 2-deoxy-alpha-D-ribose 1-phosphate. In terms of biological role, catalyzes the reversible phosphorolytic breakdown of the N-glycosidic bond in the beta-(deoxy)ribonucleoside molecules, with the formation of the corresponding free purine bases and pentose-1-phosphate. The chain is Purine nucleoside phosphorylase DeoD-type 1 from Vibrio parahaemolyticus serotype O3:K6 (strain RIMD 2210633).